Consider the following 927-residue polypeptide: Translation initiation factor IF-2 (927 aa).

The segment at 27-337 is disordered; the sequence is LGLPVKSHAS…GAPKPVTERK (311 aa). A compositionally biased stretch (polar residues) spans 49–69; it reads SFSSSKTKAPTNSVQTNQGVK. Basic and acidic residues-rich tracts occupy residues 70-86 and 101-138; these read TESK…DDKP and FKAE…DRRH. Over residues 146–159 the composition is skewed to low complexity; sequence GNRNDNRQGQQNNR. Composition is skewed to basic and acidic residues over residues 160 to 171, 202 to 226, and 234 to 257; these read NKNDGRYADHKQ, YSRH…EQEL, and AQEE…KEIV. Low complexity predominate over residues 300 to 316; that stretch reads NWNNQNQVRNQRNSNWN. The tr-type G domain maps to 428-597; the sequence is ERPPVVTIMG…LLVAEMEELK (170 aa). Positions 437–444 are G1; the sequence is GHVDHGKT. 437–444 provides a ligand contact to GTP; the sequence is GHVDHGKT. Positions 462-466 are G2; the sequence is GITQH. The segment at 483–486 is G3; it reads DTPG. GTP contacts are provided by residues 483–487 and 537–540; these read DTPGH and NKID. The G4 stretch occupies residues 537–540; sequence NKID. The G5 stretch occupies residues 573 to 575; sequence SAK.

This sequence belongs to the TRAFAC class translation factor GTPase superfamily. Classic translation factor GTPase family. IF-2 subfamily.

The protein resides in the cytoplasm. One of the essential components for the initiation of protein synthesis. Protects formylmethionyl-tRNA from spontaneous hydrolysis and promotes its binding to the 30S ribosomal subunits. Also involved in the hydrolysis of GTP during the formation of the 70S ribosomal complex. This chain is Translation initiation factor IF-2, found in Streptococcus agalactiae serotype V (strain ATCC BAA-611 / 2603 V/R).